The chain runs to 235 residues: Transcriptional regulatory protein CseB (235 aa).

A Response regulatory domain is found at 6–119 (HVLFVEDDDV…VLVARIRAVL (114 aa)). Position 55 is a 4-aspartylphosphate (Asp-55). Positions 141–235 (GGVLTFGELE…VRGFGYKLKA (95 aa)) form a DNA-binding region, ompR/PhoB-type.

Phosphorylated by CseC.

Its subcellular location is the cytoplasm. Member of the two-component regulatory system CseB/CseC involved in the stability of the cell envelope. CseB activates transcription of RNA polymerase sigma-E factor, in response to changes in the cell envelope. In Streptomyces avermitilis (strain ATCC 31267 / DSM 46492 / JCM 5070 / NBRC 14893 / NCIMB 12804 / NRRL 8165 / MA-4680), this protein is Transcriptional regulatory protein CseB (cseB).